A 540-amino-acid polypeptide reads, in one-letter code: Putative cysteine ligase BshC (540 aa).

Residues 425–453 (IEKVEGMIEQQRRLNKDLLDEVAGNQNNI) adopt a coiled-coil conformation.

It belongs to the BshC family.

In terms of biological role, involved in bacillithiol (BSH) biosynthesis. May catalyze the last step of the pathway, the addition of cysteine to glucosamine malate (GlcN-Mal) to generate BSH. This chain is Putative cysteine ligase BshC, found in Staphylococcus aureus (strain NCTC 8325 / PS 47).